The following is a 382-amino-acid chain: RNA binding protein fox-1 homolog 1-like (382 aa).

2 disordered regions span residues 34–79 (QEAG…AAHP) and 94–148 (GPQH…QPKR). The span at 49 to 65 (YAPPPSYPPPGQAPPTP) shows a compositional bias: pro residues. The segment covering 101 to 110 (ESITASNTDD) has biased composition (polar residues). Positions 147–223 (KRLHVSNIPF…RKIEVNNATA (77 aa)) constitute an RRM domain.

As to expression, expressed during muscle development in adaxial cells, somites, cardiac precursors, finbuds and jaw muscle cells.

It is found in the nucleus. RNA-binding protein that regulates alternative splicing events by binding to 5'-GCAUG-3' elements. Regulates alternative splicing of tissue-specific exons. In Danio rerio (Zebrafish), this protein is RNA binding protein fox-1 homolog 1-like (rbfox1l).